The following is a 1033-amino-acid chain: MAPRLQLEKAAWRWTETVPPEAVTQEHIEAAYRVGLEPCQRGTCRRNCRGNPNCLVGIGEHVWLGEIDENSFHNIDDPNCERRKKNAFVGLTNLGATCYVNTFLQMWFLNLELRQALYLCSSNEHAAGESIPKDKDYEPQTICEHLQYLFALLQNSKRRYIDPSGFVKALGLDTGQQQDAQEFSKLFMSLLEDTLSKQKNPDVRNIVQKQFCGEYAYVTVCNQCGRESKLVSKFYELELNIQGHKQLTDCITEFLKEEKLEGDNRYFCETCQSKQNATRKIRLLSLPCTLNLQLMRFVFDRQTGHKKKLNTYIGFSELLDMEPFMEQKNGVYVYELSAVLIHRGVSAYSGHYIAHVKDPQTGEWYKFNDEDIEKMEGKKLQLGIEEDLAEPSKSQTRKPKCGKGTHCSRNAYMLVYRLQTREKSLTVEVPAFLQELVERDNCKFEEWCNEMAEMRKQSVARGKIKHEEVKELYQRLPAEAGSPYDFISLEWLQKWLDESTPPKPIDNTACLCSHGKLHPDKICIMKRISEYVADFFYRRYGGGPRLNVKALCKDCVVERCRILRLKNQLNEDYKTVTNLLKITVKGSEGFWVGKASLRSWRQLALEQLNEQDEDAEHSNGKLNGNAPNKDEVNEEKREEEEELNFNEDIVCPHGDLCISENERRVVSKEAWKKLKQYFPKAPEFPSNKECCSQCKILEREGEENEALHKMMASEQKTSLQNLFHDKCRPCLGSWPQETDELYIVSQFFVEEWRKFVRRPTRCSPVSSLGNSALLCPHGGLMFTYASMTKEDSKLIALIWPSEWERIQKLFVVDHVIKITRTRAAGEPESALYSSEPQLCPECRGGLLCQQQRDLREYTQATIYIHKVVDNKKVMKDAAPELNVSSSEAEEEREENKPEGEQDPDFNQSNGGAKRQKLSHQSYISYQKQGIRRSTRHRKVRGEKALLVSANQTLKELKIQIMHAFSVAPFDQNLLIDGKILSDDTATLGSLGIIPESVILLKADEPIADYAAMDDVMQVCMPEEGFKGTGLLGH.

One can recognise a USP domain in the interval 89–419 (VGLTNLGATC…NAYMLVYRLQ (331 aa)). Cys98 acts as the Nucleophile in catalysis. Catalysis depends on His351, which acts as the Proton acceptor. 3 DUSP domains span residues 457–552 (QSVA…KALC), 567–690 (NQLN…NKEC), and 710–823 (MMAS…RTRA). The tract at residues 610 to 639 (EQDEDAEHSNGKLNGNAPNKDEVNEEKREE) is disordered. Residues 878-920 (APELNVSSSEAEEEREENKPEGEQDPDFNQSNGGAKRQKLSHQ) form a disordered region. The Ubiquitin-like domain occupies 931-1007 (RRSTRHRKVR…ILLKADEPIA (77 aa)).

This sequence belongs to the peptidase C19 family.

The protein resides in the cytoplasm. It is found in the nucleus. It carries out the reaction Thiol-dependent hydrolysis of ester, thioester, amide, peptide and isopeptide bonds formed by the C-terminal Gly of ubiquitin (a 76-residue protein attached to proteins as an intracellular targeting signal).. Recognizes and hydrolyzes the peptide bond at the C-terminal Gly of ubiquitin. Involved in the processing of poly-ubiquitin precursors as well as that of ubiquitinated proteins. This Gallus gallus (Chicken) protein is Ubiquitin carboxyl-terminal hydrolase 48 (USP48).